The chain runs to 374 residues: Queuine tRNA-ribosyltransferase (374 aa).

Asp89 functions as the Proton acceptor in the catalytic mechanism. Substrate is bound by residues 89 to 93 (DSGGF), Asp143, Gln185, and Gly212. Residues 243-249 (GVGKPED) are RNA binding. The active-site Nucleophile is the Asp262. An RNA binding; important for wobble base 34 recognition region spans residues 267–271 (TRNAR). Residues Cys300, Cys302, Cys305, and His331 each coordinate Zn(2+).

It belongs to the queuine tRNA-ribosyltransferase family. In terms of assembly, homodimer. Within each dimer, one monomer is responsible for RNA recognition and catalysis, while the other monomer binds to the replacement base PreQ1. Zn(2+) serves as cofactor.

The enzyme catalyses 7-aminomethyl-7-carbaguanine + guanosine(34) in tRNA = 7-aminomethyl-7-carbaguanosine(34) in tRNA + guanine. It participates in tRNA modification; tRNA-queuosine biosynthesis. Functionally, catalyzes the base-exchange of a guanine (G) residue with the queuine precursor 7-aminomethyl-7-deazaguanine (PreQ1) at position 34 (anticodon wobble position) in tRNAs with GU(N) anticodons (tRNA-Asp, -Asn, -His and -Tyr). Catalysis occurs through a double-displacement mechanism. The nucleophile active site attacks the C1' of nucleotide 34 to detach the guanine base from the RNA, forming a covalent enzyme-RNA intermediate. The proton acceptor active site deprotonates the incoming PreQ1, allowing a nucleophilic attack on the C1' of the ribose to form the product. After dissociation, two additional enzymatic reactions on the tRNA convert PreQ1 to queuine (Q), resulting in the hypermodified nucleoside queuosine (7-(((4,5-cis-dihydroxy-2-cyclopenten-1-yl)amino)methyl)-7-deazaguanosine). The sequence is that of Queuine tRNA-ribosyltransferase from Saccharophagus degradans (strain 2-40 / ATCC 43961 / DSM 17024).